The chain runs to 282 residues: 4-hydroxy-tetrahydrodipicolinate reductase (282 aa).

Residues 14 to 19 (GAMGRM) and 115 to 117 (GTT) each bind NAD(+). The active-site Proton donor/acceptor is the histidine 171. (S)-2,3,4,5-tetrahydrodipicolinate is bound at residue histidine 172. Lysine 175 acts as the Proton donor in catalysis. 181–182 (GT) serves as a coordination point for (S)-2,3,4,5-tetrahydrodipicolinate.

It belongs to the DapB family.

The protein resides in the cytoplasm. The catalysed reaction is (S)-2,3,4,5-tetrahydrodipicolinate + NAD(+) + H2O = (2S,4S)-4-hydroxy-2,3,4,5-tetrahydrodipicolinate + NADH + H(+). The enzyme catalyses (S)-2,3,4,5-tetrahydrodipicolinate + NADP(+) + H2O = (2S,4S)-4-hydroxy-2,3,4,5-tetrahydrodipicolinate + NADPH + H(+). The protein operates within amino-acid biosynthesis; L-lysine biosynthesis via DAP pathway; (S)-tetrahydrodipicolinate from L-aspartate: step 4/4. In terms of biological role, catalyzes the conversion of 4-hydroxy-tetrahydrodipicolinate (HTPA) to tetrahydrodipicolinate. This chain is 4-hydroxy-tetrahydrodipicolinate reductase, found in Prochlorococcus marinus (strain NATL2A).